The chain runs to 331 residues: Cathepsin 7 (331 aa).

The N-terminal stretch at 1–17 (MTVAVFLAILCLRAALA) is a signal peptide. Residues 18–111 (APRPDYSLDA…GKHIQKRNVK (94 aa)) constitute a propeptide, activation peptide. Positions 33-50 (KRNNAKTYSPEEEKQRRA) match the Nuclear localization signal motif. A glycan (N-linked (GlcNAc...) asparagine) is linked at asparagine 72. Disulfide bonds link cysteine 133–cysteine 176, cysteine 167–cysteine 209, and cysteine 267–cysteine 320. Cysteine 136 is an active-site residue. Catalysis depends on residues histidine 274 and asparagine 298.

The protein belongs to the peptidase C1 family.

The protein resides in the endosome. The protein localises to the lysosome. It localises to the cytoplasm. It is found in the perinuclear region. Its subcellular location is the golgi apparatus. The protein resides in the nucleus. The protein localises to the secreted. It localises to the extracellular space. Functionally, involved in trophoblast cell proliferation and differentiation probably by affecting mitotic cell cycle progression. Proteolytic activity and nuclear localization are essential for its role in cell cycle progression. The protein is Cathepsin 7 (Cts7) of Rattus norvegicus (Rat).